A 1522-amino-acid polypeptide reads, in one-letter code: Adhesion G protein-coupled receptor B3 (1522 aa).

The first 25 residues, M1–A25, serve as a signal peptide directing secretion. Over Q26–T880 the chain is Extracellular. In terms of domain architecture, CUB spans C30 to N159. N-linked (GlcNAc...) asparagine glycosylation is found at N51, N54, N82, N105, and N241. 4 consecutive TSP type-1 domains span residues E291–P343, H345–P398, D400–T453, and N455–P508. 14 disulfides stabilise this stretch: C303–C336, C307–C342, C318–C326, C357–C392, C361–C397, C372–C382, C412–C447, C416–C452, C427–C437, C467–C502, C471–C507, C482–C492, C514–C549, and C537–C567. N337 carries N-linked (GlcNAc...) asparagine glycosylation. N-linked (GlcNAc...) asparagine glycosylation is present at N418. The N-linked (GlcNAc...) asparagine glycan is linked to N540. Position 619 is a phosphoserine (S619). 4 N-linked (GlcNAc...) asparagine glycosylation sites follow: N625, N779, N812, and N828. Residues Q693–I869 form the GAIN-B domain. 2 disulfide bridges follow: C819–C851 and C839–C853. The tract at residues C819 to I869 is GPS. A helical transmembrane segment spans residues L881–A901. Topologically, residues L902–R910 are cytoplasmic. Residues S911–G931 traverse the membrane as a helical segment. Residues Q932–S939 lie on the Extracellular side of the membrane. The N-linked (GlcNAc...) asparagine glycan is linked to N937. Residues I940–L960 form a helical membrane-spanning segment. The Cytoplasmic segment spans residues T961–K981. The chain crosses the membrane as a helical span at residues R982–T1002. The Extracellular portion of the chain corresponds to R1003–Y1023. The helical transmembrane segment at A1024–F1044 threads the bilayer. The Cytoplasmic segment spans residues N1045–S1098. Residues L1099–A1119 traverse the membrane as a helical segment. The Extracellular segment spans residues M1120 to S1125. Residues I1126 to V1146 form a helical membrane-spanning segment. Residues H1147 to V1522 lie on the Cytoplasmic side of the membrane. Phosphoserine occurs at positions 1220 and 1411.

This sequence belongs to the G-protein coupled receptor 2 family. Adhesion G-protein coupled receptor (ADGR) subfamily. In terms of assembly, forms a heterodimer, consisting of a large extracellular region non-covalently linked to a seven-transmembrane moiety. Interacts (via its TSRs) with C1QL1, C1QL2, C1QL3 and C1QL4. Interacts via (C-terminus) with ELMO1, ELMO2 and ELMO3. Post-translationally, the endogenous protein is proteolytically cleaved into 2 subunits, an extracellular subunit and a seven-transmembrane subunit. Brain-specific expression.

The protein localises to the cell membrane. In terms of biological role, receptor that plays a role in the regulation of synaptogenesis and dendritic spine formation at least partly via interaction with ELMO1 and RAC1 activity. Promotes myoblast fusion through ELMO/DOCK1. The polypeptide is Adhesion G protein-coupled receptor B3 (Adgrb3) (Mus musculus (Mouse)).